The primary structure comprises 86 residues: Acyl carrier protein (86 aa).

Positions 10–85 (DKIEQKVIEM…DVIQYIKERQ (76 aa)) constitute a Carrier domain. O-(pantetheine 4'-phosphoryl)serine is present on Ser-45.

This sequence belongs to the acyl carrier protein (ACP) family. Post-translationally, 4'-phosphopantetheine is transferred from CoA to a specific serine of apo-ACP by AcpS. This modification is essential for activity because fatty acids are bound in thioester linkage to the sulfhydryl of the prosthetic group.

Its subcellular location is the cytoplasm. It participates in lipid metabolism; fatty acid biosynthesis. Carrier of the growing fatty acid chain in fatty acid biosynthesis. This is Acyl carrier protein from Rickettsia canadensis (strain McKiel).